The primary structure comprises 297 residues: Cell division protein FtsX (297 aa).

The Cytoplasmic portion of the chain corresponds to Met1 to Thr24. The helical transmembrane segment at Phe25 to Ile45 threads the bilayer. The Extracellular portion of the chain corresponds to Met46–Asn171. A helical membrane pass occupies residues Ile172–Ile192. Over Lys193–Pro219 the chain is Cytoplasmic. A helical membrane pass occupies residues Phe220–Leu240. Residues Val241–Gln270 are Extracellular-facing. The chain crosses the membrane as a helical span at residues Leu271–Ile291. At Arg292–Val297 the chain is on the cytoplasmic side.

It belongs to the ABC-4 integral membrane protein family. FtsX subfamily. As to quaternary structure, interacts with FtsE.

It is found in the cell membrane. Functionally, part of the ABC transporter FtsEX involved in asymmetric cellular division facilitating the initiation of sporulation. The sequence is that of Cell division protein FtsX from Bacillus anthracis.